A 266-amino-acid polypeptide reads, in one-letter code: Integral membrane protein 2B (266 aa).

Residues 1-54 (MVKVTFNSALAQKEAKKDEPKSSEEALIAPPDAVAVDCKDPDDVVPVGQRRAWC) lie on the Cytoplasmic side of the membrane. A helical; Signal-anchor for type II membrane protein membrane pass occupies residues 55–75 (WCMCFGLAFMLAGVILGGAYL). The Lumenal segment spans residues 76–266 (YKYFALQPDD…KFAVETLICS (191 aa)). A necessary for interaction with APP and inhibitor effects on APP processing region spans residues 102–134 (EPSADAPAARYQTIEENIKIFEEDAVEFISVPV). The 95-residue stretch at 137–231 (FADSDPANIV…LCHDKETYKL (95 aa)) folds into the BRICHOS domain. Disulfide bonds link cysteine 164–cysteine 223 and cysteine 248–cysteine 265. The N-linked (GlcNAc...) asparagine glycan is linked to asparagine 170.

This sequence belongs to the ITM2 family. In terms of assembly, homodimer; disulfide-linked. Interacts with SPPL2A and SPPL2B. Interacts with APP. Mature BRI2 (mBRI2) interacts with the APP amyloid-beta A4 protein; the interaction occurs at the cell surface and in the endocytic compartments and enable alpha- and beta-secretase-induced APP cleavage inhibition. Mature BRI2 (mBRI2) interacts with the APP C99; the interaction occurs in the endocytic compartments and enable gamma-secretase-induced C99 cleavage inhibition. May form heterodimers with Bri23 peptide and APP amyloid-beta protein 40. Interacts with ADAM7 in sperm; the interaction increases following capacitation. Post-translationally, the ectodomain C-terminal part of the imBRI2 is processed by furin producing a secreted Bri23 peptide and a mature BRI2, membrane form (mBRI2). The remaining part of the ectodomain of mBRI2 containing the BRICHOS domain is cleaved by ADAM10 and is secreted (BRI2C, soluble form). The membrane-bound N-terminal fragment (BRI2C, membrane form) is further proteolytically processed by SPPL2A and SPPL2B through regulated intramembrane proteolysis producing a secreted C-peptide and a BRI2 intracellular domain (BRI2 ICD) released in the cytosol. Shedding by ADAM10 facilitates intramembrane cleavage but is not absolutely required for BRI2 ICD generation. Glycosylation at Asn-170 is important for cell surface localization, but doesn't affect furin- and ADAM10-induced proteolytic processing.

It localises to the golgi apparatus membrane. The protein resides in the cell membrane. It is found in the endosome membrane. The protein localises to the secreted. Its function is as follows. Plays a regulatory role in the processing of the amyloid-beta A4 precursor protein (APP) and acts as an inhibitor of the amyloid-beta peptide aggregation and fibrils deposition. Plays a role in the induction of neurite outgrowth. Functions as a protease inhibitor by blocking access of secretases to APP cleavage sites. Mature BRI2 (mBRI2) functions as a modulator of the amyloid-beta A4 precursor protein (APP) processing leading to a strong reduction in the secretion of secretase-processed amyloid-beta protein 40 and amyloid-beta protein 42. In terms of biological role, bri23 peptide prevents aggregation of APP amyloid-beta protein 42 into toxic oligomers. The polypeptide is Integral membrane protein 2B (Itm2b) (Rattus norvegicus (Rat)).